Consider the following 335-residue polypeptide: COP9 signalosome complex subunit 5 (335 aa).

Residues 51–187 (VRISAVALLK…IGAFRTFPKD (137 aa)) enclose the MPN domain. Zn(2+) is bound by residues His134, His136, and Asp147. A JAMM motif motif is present at residues 134 to 147 (HSHPGYGCWLSGID).

The protein belongs to the peptidase M67A family. CSN5 subfamily. Component of the COP9 signalosome (CSN) complex.

The protein resides in the cytoplasm. Its subcellular location is the nucleus. Catalytic component of the COP9 signalosome (CSN) complex that acts as an regulator of the ubiquitin (Ubl) conjugation pathway by mediating the deneddylation of the cullin subunit of SCF-type E3 ubiquitin-protein ligase complexes. The CSN complex seems to link protein degradation to sexual development. Required for fruit body formation. This chain is COP9 signalosome complex subunit 5 (rri1), found in Emericella nidulans (strain FGSC A4 / ATCC 38163 / CBS 112.46 / NRRL 194 / M139) (Aspergillus nidulans).